Reading from the N-terminus, the 558-residue chain is MARVEL domain-containing protein 2 (558 aa).

A compositionally biased stretch (basic and acidic residues) spans 1 to 16; it reads MSNDGRSRNRDRRYDE. 2 disordered regions span residues 1–58 and 115–145; these read MSND…PPFG and CSPP…GTFS. The Cytoplasmic segment spans residues 1-194; sequence MSNDGRSRNR…YMKSWAGLLR (194 aa). A compositionally biased stretch (pro residues) spans 45–58; the sequence is PLPPPPLPLQPPFG. Residues S116, S120, and S161 each carry the phosphoserine modification. At T166 the chain carries Phosphothreonine. In terms of domain architecture, MARVEL spans 188 to 367; sequence SWAGLLRILG…SALVCLKLWR (180 aa). Residues 195–215 traverse the membrane as a helical segment; it reads ILGVVELLLGAGVFACVTAYI. At 216-223 the chain is on the extracellular side; that stretch reads HKDSEWYN. A helical membrane pass occupies residues 224–244; that stretch reads LFGYSQPYGMGGVGGLGSMYG. Residues 245–254 lie on the Cytoplasmic side of the membrane; that stretch reads GYYYTGPKTP. The chain crosses the membrane as a helical span at residues 255–275; the sequence is FVLVVAGLAWITTIIILVLGM. Residues 276–291 lie on the Extracellular side of the membrane; it reads SMYYRTILLDSNWWPL. The chain crosses the membrane as a helical span at residues 292 to 312; it reads TEFGINVALFILYMAAAIVYV. The Cytoplasmic portion of the chain corresponds to 313-319; sequence NDTNRGG. Residues 320 to 337 form a helical membrane-spanning segment; the sequence is LCYYPLFNTPVNAVFCRV. The Extracellular segment spans residues 338–341; it reads EGGQ. The chain crosses the membrane as a helical span at residues 342-362; it reads IAAMIFLFVTMIVYLISALVC. At 363 to 558 the chain is on the cytoplasmic side; sequence LKLWRHEAAR…VMNWDVQGYS (196 aa). The residue at position 387 (S387) is a Phosphoserine. K412 is covalently cross-linked (Glycyl lysine isopeptide (Lys-Gly) (interchain with G-Cter in ubiquitin)). Positions 439–548 form a coiled coil; sequence MPDYVAKYPV…IKQRIQEYDK (110 aa). The region spanning 440 to 551 is the OCEL domain; sequence PDYVAKYPVI…RIQEYDKVMN (112 aa).

This sequence belongs to the ELL/occludin family. Interacts with TJP1. Interacts with the ubiquitin ligase ITCH. Interacts (via C-terminal cytoplasmic domain) with LSR (via the cytoplasmic domain), ILDR1 and ILDR2; the interaction is required to recruit MARVELD2 to tricellular contacts. In terms of processing, ubiquitinated by ITCH; but this ubiquitination does not lead to proteasomal degradation. Polyubiquitinated at Lys-412 via 'Lys-63'-linked ubiquitin chains; deubiquitinated by USP53. Post-translationally, phosphorylated.

Its subcellular location is the cell membrane. The protein localises to the cell junction. The protein resides in the tight junction. Functionally, plays a role in the formation of tricellular tight junctions and of epithelial barriers. Required for normal hearing via its role in the separation of the endolymphatic and perilymphatic spaces of the organ of Corti in the inner ear, and for normal survival of hair cells in the organ of Corti. This Homo sapiens (Human) protein is MARVEL domain-containing protein 2.